A 166-amino-acid chain; its full sequence is MSNGQLVSQVTVGHDKPLDREKVCPMLLRVFVANNRHNPMSEYNSRNGGSVPPSELQMHTWMDCSLRELTSLIKEVNPDARRKGTTFDFAIVQADRGSPRYILRDVGNTTNGERGIDDNKTLQQCKFEVGDFVDVAISLPSQGRRFNNREQGDRFDHRQRQRSPIR.

Positions 143 to 166 are disordered; the sequence is GRRFNNREQGDRFDHRQRQRSPIR. A compositionally biased stretch (basic and acidic residues) spans 147–158; it reads NNREQGDRFDHR.

Belongs to the SAP18 family. As to quaternary structure, interacts with SIN3 and histone deacetylase.

Acts in transcription repression. Involved in the tethering of the SIN3 complex to core histone proteins. The polypeptide is Probable histone deacetylase complex subunit SAP18 (Caenorhabditis elegans).